The primary structure comprises 324 residues: Signal peptidase I (324 aa).

Residues 1-3 (MAN) lie on the Periplasmic side of the membrane. Residues 4–22 (MFALILVIATLVTGILWCV) form a helical membrane-spanning segment. Topologically, residues 23 to 58 (DKFVFAPKRRARQAAAQTASGDALDNATLNKVAPKP) are cytoplasmic. A helical membrane pass occupies residues 59–77 (GWLETGASVFPVLAIVLIV). Residues 78-324 (RSFLYEPFQI…VRLSRIGGIH (247 aa)) are Periplasmic-facing. Catalysis depends on residues serine 91 and lysine 146.

Belongs to the peptidase S26 family.

It localises to the cell inner membrane. It carries out the reaction Cleavage of hydrophobic, N-terminal signal or leader sequences from secreted and periplasmic proteins.. The chain is Signal peptidase I (lepB) from Salmonella typhi.